We begin with the raw amino-acid sequence, 114 residues long: Large ribosomal subunit protein bL20 (114 aa).

Belongs to the bacterial ribosomal protein bL20 family.

Binds directly to 23S ribosomal RNA and is necessary for the in vitro assembly process of the 50S ribosomal subunit. It is not involved in the protein synthesizing functions of that subunit. In Anaeromyxobacter dehalogenans (strain 2CP-1 / ATCC BAA-258), this protein is Large ribosomal subunit protein bL20.